We begin with the raw amino-acid sequence, 462 residues long: Cysteine--tRNA ligase (462 aa).

Residue Cys30 coordinates Zn(2+). Positions 32 to 42 (MTVYDYCHVGH) match the 'HIGH' region motif. The Zn(2+) site is built by Cys214, His239, and Glu243. The 'KMSKS' region signature appears at 271-275 (KMSKS). Residue Lys274 coordinates ATP.

Belongs to the class-I aminoacyl-tRNA synthetase family. Monomer. The cofactor is Zn(2+).

It localises to the cytoplasm. It catalyses the reaction tRNA(Cys) + L-cysteine + ATP = L-cysteinyl-tRNA(Cys) + AMP + diphosphate. This is Cysteine--tRNA ligase from Cupriavidus taiwanensis (strain DSM 17343 / BCRC 17206 / CCUG 44338 / CIP 107171 / LMG 19424 / R1) (Ralstonia taiwanensis (strain LMG 19424)).